The sequence spans 511 residues: Maturase K (511 aa).

The protein belongs to the intron maturase 2 family. MatK subfamily.

The protein localises to the plastid. The protein resides in the chloroplast. Its function is as follows. Usually encoded in the trnK tRNA gene intron. Probably assists in splicing its own and other chloroplast group II introns. The sequence is that of Maturase K from Melica altissima (Siberian melic grass).